The following is a 387-amino-acid chain: S-adenosylmethionine synthase (387 aa).

E8 lines the Mg(2+) pocket. An ATP-binding site is contributed by H14. Position 42 (E42) interacts with K(+). L-methionine is bound by residues E55 and Q98. Residues 166-168 (DGK), 234-237 (SGRF), D245, 251-252 (RK), A268, K272, and K276 contribute to the ATP site. D245 is an L-methionine binding site. Residue K276 participates in L-methionine binding.

This sequence belongs to the AdoMet synthase family. As to quaternary structure, homotetramer. It depends on Mn(2+) as a cofactor. Requires Mg(2+) as cofactor. Co(2+) is required as a cofactor. The cofactor is K(+).

It is found in the cytoplasm. The catalysed reaction is L-methionine + ATP + H2O = S-adenosyl-L-methionine + phosphate + diphosphate. It functions in the pathway amino-acid biosynthesis; S-adenosyl-L-methionine biosynthesis; S-adenosyl-L-methionine from L-methionine: step 1/1. In terms of biological role, catalyzes the formation of S-adenosylmethionine from methionine and ATP. The reaction comprises two steps that are both catalyzed by the same enzyme: formation of S-adenosylmethionine (AdoMet) and triphosphate, and subsequent hydrolysis of the triphosphate. The polypeptide is S-adenosylmethionine synthase (METK-1) (Ostreococcus lucimarinus (strain CCE9901)).